The sequence spans 467 residues: MAWNTNLRWRLPLLCLVLEVAMVVLFGLFVRYSPDADSSWSNEKRKGNITSDLENEFYYRYPSFQDVHVMVFLGFGFLMTFLQRYGYCALGFNFLLAALGVQWALLMQGWFQYTKDRLILLGIKNLIDADSCVASVCVAFGAVLGKVSPVQMLLMTFFQVALFSANEFLLLHVLEVKDAGGSITIHIFGAYFGLTVTWILYRHNLDHSRERQSSVYHSNLFAMIGTLFLWIYWPSFNSAMSNYGDAQHRAAINTYCSLAASVLTSVAMSSVLHKKGKLDMVHIQNATLAGGVGVGTAAEMMLMPYGALIVGFICGAVSTLGFVYLTPFLESRLRIQDTCGIHNLHGIPGLIGAIVGAVTAAYASPDGDRGFVYPFGFHNEKDEKVQGRFQAFGLLLTLAIAMVGGTIMGLILKLPFWGQAMDEDCFDDSIYWEMHEEKSSSPEDHTHKPSVPTEPVEQPTSSATLAP.

Over 1–9 (MAWNTNLRW) the chain is Cytoplasmic. The helical transmembrane segment at 10-30 (RLPLLCLVLEVAMVVLFGLFV) threads the bilayer. Residues 31–61 (RYSPDADSSWSNEKRKGNITSDLENEFYYRY) are Extracellular-facing. N-linked (GlcNAc...) asparagine glycosylation is present at N48. The chain crosses the membrane as a helical span at residues 62–82 (PSFQDVHVMVFLGFGFLMTFL). Over 83–86 (QRYG) the chain is Cytoplasmic. A helical transmembrane segment spans residues 87 to 107 (YCALGFNFLLAALGVQWALLM). The Extracellular segment spans residues 108–131 (QGWFQYTKDRLILLGIKNLIDADS). A run of 2 helical transmembrane segments spans residues 132–152 (CVAS…PVQM) and 153–173 (LLMT…LLHV). Topologically, residues 174–179 (LEVKDA) are extracellular. The helical transmembrane segment at 180 to 200 (GGSITIHIFGAYFGLTVTWIL) threads the bilayer. Residues 201-219 (YRHNLDHSRERQSSVYHSN) lie on the Cytoplasmic side of the membrane. A helical membrane pass occupies residues 220–240 (LFAMIGTLFLWIYWPSFNSAM). Topologically, residues 241 to 251 (SNYGDAQHRAA) are extracellular. Residues 252–272 (INTYCSLAASVLTSVAMSSVL) traverse the membrane as a helical segment. Over 273-282 (HKKGKLDMVH) the chain is Cytoplasmic. Residues 283-303 (IQNATLAGGVGVGTAAEMMLM) traverse the membrane as a helical segment. Position 304 (P304) is a topological domain, extracellular. A helical transmembrane segment spans residues 305-325 (YGALIVGFICGAVSTLGFVYL). The Cytoplasmic portion of the chain corresponds to 326–343 (TPFLESRLRIQDTCGIHN). A helical membrane pass occupies residues 344-364 (LHGIPGLIGAIVGAVTAAYAS). Over 365-391 (PDGDRGFVYPFGFHNEKDEKVQGRFQA) the chain is Extracellular. A helical membrane pass occupies residues 392-412 (FGLLLTLAIAMVGGTIMGLIL). Residues 413–467 (KLPFWGQAMDEDCFDDSIYWEMHEEKSSSPEDHTHKPSVPTEPVEQPTSSATLAP) lie on the Cytoplasmic side of the membrane. The span at 436–447 (EEKSSSPEDHTH) shows a compositional bias: basic and acidic residues. A disordered region spans residues 436–467 (EEKSSSPEDHTHKPSVPTEPVEQPTSSATLAP). Residues 458–467 (QPTSSATLAP) show a composition bias toward polar residues.

This sequence belongs to the ammonium transporter (TC 2.A.49) family. Rh subfamily. Homotrimer. Post-translationally, N-glycosylated.

Its subcellular location is the cell membrane. The protein resides in the apical cell membrane. It catalyses the reaction NH4(+)(in) = NH4(+)(out). It carries out the reaction methylamine(out) = methylamine(in). The catalysed reaction is CO2(out) = CO2(in). Ammonium transporter involved in the maintenance of acid-base homeostasis. Transports ammonium and its related derivative methylammonium across the plasma membrane of epithelial cells likely contributing to renal transepithelial ammonia transport and ammonia metabolism. Postulated to primarily mediate an electroneutral bidirectional transport of NH3 ammonia species according to a mechanism that implies interaction of an NH4(+) ion with acidic residues of the pore entry followed by dissociation of NH4(+) into NH3 and H(+). As a result NH3 transits through the central pore and is protonated on the extracellular side reforming NH4(+). May act as a CO2 channel providing for renal acid secretion. The protein is Ammonium transporter Rh type C (RHCG) of Oryctolagus cuniculus (Rabbit).